The following is a 278-amino-acid chain: MYSLSSVSKHLILVHILALVATQLLLIRSVSSLNMTNSYLNHKCFVSQGKYKPGSAHEKSLEAIIHSISVGENVNSGYDMMSFGDGPDLVCVVLQCRGDSYGSKCRSCFASAMAGLRRRCPRYKGGIIWFDQCLLEISSIDNVGQLNYGDSFCMSNAKNVGDDPFSFILKWDTLFDNISRIAITEKNKNLKDTNKPALYGAGEKRLGTKKKMYGMVQCTDDLSVKACEECLVANILKFQNCWKSGKRGARVLDRSCNFRYELYPFVNAKTGPNSYFKS.

Residues 1-32 (MYSLSSVSKHLILVHILALVATQLLLIRSVSS) form the signal peptide. Gnk2-homologous domains are found at residues 39–142 (YLNH…SIDN) and 148–265 (YGDS…LYPF).

It belongs to the cysteine-rich repeat secretory protein family.

It is found in the secreted. The protein is Putative cysteine-rich repeat secretory protein 17 (CRRSP17) of Arabidopsis thaliana (Mouse-ear cress).